Consider the following 111-residue polypeptide: Large ribosomal subunit protein uL22 (111 aa).

Belongs to the universal ribosomal protein uL22 family. Part of the 50S ribosomal subunit.

This protein binds specifically to 23S rRNA; its binding is stimulated by other ribosomal proteins, e.g. L4, L17, and L20. It is important during the early stages of 50S assembly. It makes multiple contacts with different domains of the 23S rRNA in the assembled 50S subunit and ribosome. In terms of biological role, the globular domain of the protein is located near the polypeptide exit tunnel on the outside of the subunit, while an extended beta-hairpin is found that lines the wall of the exit tunnel in the center of the 70S ribosome. The sequence is that of Large ribosomal subunit protein uL22 from Chlamydia pneumoniae (Chlamydophila pneumoniae).